The chain runs to 248 residues: Pyridoxine 5'-phosphate synthase (248 aa).

Residue Asn-10 participates in 3-amino-2-oxopropyl phosphate binding. Asp-12 to His-13 lines the 1-deoxy-D-xylulose 5-phosphate pocket. Arg-21 provides a ligand contact to 3-amino-2-oxopropyl phosphate. The Proton acceptor role is filled by His-46. Residues Arg-48 and His-53 each coordinate 1-deoxy-D-xylulose 5-phosphate. The active-site Proton acceptor is the Glu-73. Residue Thr-103 participates in 1-deoxy-D-xylulose 5-phosphate binding. His-194 serves as the catalytic Proton donor. Residues Gly-195 and Gly-216–His-217 contribute to the 3-amino-2-oxopropyl phosphate site.

It belongs to the PNP synthase family. Homooctamer; tetramer of dimers.

It is found in the cytoplasm. The catalysed reaction is 3-amino-2-oxopropyl phosphate + 1-deoxy-D-xylulose 5-phosphate = pyridoxine 5'-phosphate + phosphate + 2 H2O + H(+). Its pathway is cofactor biosynthesis; pyridoxine 5'-phosphate biosynthesis; pyridoxine 5'-phosphate from D-erythrose 4-phosphate: step 5/5. Catalyzes the complicated ring closure reaction between the two acyclic compounds 1-deoxy-D-xylulose-5-phosphate (DXP) and 3-amino-2-oxopropyl phosphate (1-amino-acetone-3-phosphate or AAP) to form pyridoxine 5'-phosphate (PNP) and inorganic phosphate. This Legionella pneumophila (strain Paris) protein is Pyridoxine 5'-phosphate synthase.